Reading from the N-terminus, the 681-residue chain is Phosphomethylpyrimidine synthase (681 aa).

Residues 1–13 show a composition bias toward polar residues; sequence MSNNTTSLPAENS. The tract at residues 1-29 is disordered; that stretch reads MSNNTTSLPAENSSHPRKGTPIRKKQREE. Positions 15–25 are enriched in basic residues; that stretch reads HPRKGTPIRKK. Substrate contacts are provided by residues asparagine 254, methionine 283, tyrosine 312, histidine 348, 368–370, 409–412, and glutamate 448; these read SRG and DGLR. Position 452 (histidine 452) interacts with Zn(2+). Position 475 (tyrosine 475) interacts with substrate. Histidine 516 lines the Zn(2+) pocket. Residues cysteine 596, cysteine 599, and cysteine 604 each contribute to the [4Fe-4S] cluster site. A compositionally biased stretch (basic and acidic residues) spans 658-667; that stretch reads FRSRGSELYH. Residues 658 to 681 are disordered; that stretch reads FRSRGSELYHRPANLSAEANNEPT.

The protein belongs to the ThiC family. In terms of assembly, homodimer. The cofactor is [4Fe-4S] cluster.

It carries out the reaction 5-amino-1-(5-phospho-beta-D-ribosyl)imidazole + S-adenosyl-L-methionine = 4-amino-2-methyl-5-(phosphooxymethyl)pyrimidine + CO + 5'-deoxyadenosine + formate + L-methionine + 3 H(+). It participates in cofactor biosynthesis; thiamine diphosphate biosynthesis. In terms of biological role, catalyzes the synthesis of the hydroxymethylpyrimidine phosphate (HMP-P) moiety of thiamine from aminoimidazole ribotide (AIR) in a radical S-adenosyl-L-methionine (SAM)-dependent reaction. The sequence is that of Phosphomethylpyrimidine synthase from Yersinia pseudotuberculosis serotype I (strain IP32953).